Here is a 689-residue protein sequence, read N- to C-terminus: FAST kinase domain-containing protein 2, mitochondrial (689 aa).

Residues Ser113 and Ser126 each carry the phosphoserine modification. The 58-residue stretch at 617–674 (VAVLCVPKSVYCLNSCHPRGLMAMKIRHLNVMGFHVILIHNWELKKLKMEDAVTFVRK) folds into the RAP domain.

It belongs to the FAST kinase family. As to quaternary structure, monomer. Found in a complex with GRSF1, DDX28, DHX30 and FASTKD5. Associates with the 16S mitochondrial rRNA (16S mt-rRNA). Forms a regulatory protein-RNA complex, consisting of RCC1L, NGRN, RPUSD3, RPUSD4, TRUB2, FASTKD2 and 16S mt-rRNA. Ubiquitously expressed. Expression detected in spleen, testis, colon, heart, smooth muscle, kidney, brain, lung, liver, brown and white adipose tissue with highest expression in testis, heart and smooth muscle.

It localises to the mitochondrion matrix. It is found in the mitochondrion nucleoid. Its function is as follows. Plays an important role in assembly of the mitochondrial large ribosomal subunit. As a component of a functional protein-RNA module, consisting of RCC1L, NGRN, RPUSD3, RPUSD4, TRUB2, FASTKD2 and 16S mitochondrial ribosomal RNA (16S mt-rRNA), controls 16S mt-rRNA abundance and is required for intra-mitochondrial translation. May play a role in mitochondrial apoptosis. The sequence is that of FAST kinase domain-containing protein 2, mitochondrial (Fastkd2) from Mus musculus (Mouse).